The sequence spans 128 residues: Sulfurtransferase TusD (128 aa).

The active-site Cysteine persulfide intermediate is the C78.

Belongs to the DsrE/TusD family. As to quaternary structure, heterohexamer, formed by a dimer of trimers. The hexameric TusBCD complex contains 2 copies each of TusB, TusC and TusD. The TusBCD complex interacts with TusE.

The protein resides in the cytoplasm. Its function is as follows. Part of a sulfur-relay system required for 2-thiolation of 5-methylaminomethyl-2-thiouridine (mnm(5)s(2)U) at tRNA wobble positions. Accepts sulfur from TusA and transfers it in turn to TusE. This Escherichia coli O139:H28 (strain E24377A / ETEC) protein is Sulfurtransferase TusD.